The following is a 157-amino-acid chain: Succinate dehydrogenase assembly factor 2-B, mitochondrial (157 aa).

A mitochondrion-targeting transit peptide spans methionine 1–serine 24.

Belongs to the SDHAF2 family. As to quaternary structure, interacts with the flavoprotein subunit within the SDH catalytic dimer.

Its subcellular location is the mitochondrion matrix. Functionally, plays an essential role in the assembly of succinate dehydrogenase (SDH), an enzyme complex (also referred to as respiratory complex II) that is a component of both the tricarboxylic acid (TCA) cycle and the mitochondrial electron transport chain, and which couples the oxidation of succinate to fumarate with the reduction of ubiquinone (coenzyme Q) to ubiquinol. Required for flavinylation (covalent attachment of FAD) of the flavoprotein subunit of the SDH catalytic dimer. The chain is Succinate dehydrogenase assembly factor 2-B, mitochondrial from Drosophila persimilis (Fruit fly).